The sequence spans 301 residues: NAD kinase (301 aa).

The Proton acceptor role is filled by Asp81. NAD(+) contacts are provided by residues 81 to 82 (DG), 155 to 156 (NE), His166, Arg183, Asp185, 196 to 201 (TAYSLS), and Gln256.

It belongs to the NAD kinase family. The cofactor is a divalent metal cation.

The protein resides in the cytoplasm. It catalyses the reaction NAD(+) + ATP = ADP + NADP(+) + H(+). Functionally, involved in the regulation of the intracellular balance of NAD and NADP, and is a key enzyme in the biosynthesis of NADP. Catalyzes specifically the phosphorylation on 2'-hydroxyl of the adenosine moiety of NAD to yield NADP. In Mannheimia succiniciproducens (strain KCTC 0769BP / MBEL55E), this protein is NAD kinase.